A 399-amino-acid polypeptide reads, in one-letter code: Serine/threonine-protein kinase PKZ1 (399 aa).

The interval 30–50 (PMQCAYQTQSHSNPEGAKRGR) is disordered. The 280-residue stretch at 92–371 (WQLFDQIGAG…ADQMLQHPWM (280 aa)) folds into the Protein kinase domain. ATP-binding positions include 98–106 (IGAGAFGVV) and K121. Catalysis depends on D219, which acts as the Proton acceptor.

Belongs to the protein kinase superfamily. CAMK Ser/Thr protein kinase family. Interacts with BZP1.

The catalysed reaction is L-seryl-[protein] + ATP = O-phospho-L-seryl-[protein] + ADP + H(+). The enzyme catalyses L-threonyl-[protein] + ATP = O-phospho-L-threonyl-[protein] + ADP + H(+). Its function is as follows. May regulate an early stage of the zoospore pathway. The chain is Serine/threonine-protein kinase PKZ1 from Phytophthora infestans (Potato late blight agent).